An 841-amino-acid chain; its full sequence is MLGILNKVFDPTKRTISKYEKKANEIEALAQDFEKLSDEALRNKTIEFKEKLEKGQSVDDLLVEAFATVREASRRVTGMFPFKVQLMGGIALHEGNISEMKTGEGKTLTSTMPVYLNALSGKGVHIVTVNEYLASRDAEEMGKIFEFLGLTVGLNLNSLDKDEKREAYAADITYSTNNELGFDYLRDNMVLYKEQMVQRPLHYAVIDEVDSILIDEARTPLIISGQAAKSTKLYVQANAFVRTLKIEDDFTYDIKTKSVQLTESGMTKAEKAFGIENLFDVKHVALNHHIAQALKAHVAMQKDVDYVVEEGQVVIVDSFTGRLMKGRRYSEGLHQAIEAKEGLEVQNESMTLATITFQNYFRMYEKLSGMTGTAKTEEEEFRNIYNMQVVTIPTNQPVVRDDRPDLIYRTMEGKFKAVAEDVAQRYMTGQPVLVGTVAVETSELISKLLKNKGIPHQVLNAKNHEREAQIIEEAGQKGAVTIATNMAGRGTDIKLGEGVKELGGLAVIGTERHESRRIDNQLRGRSGRQGDPGITQFYLSMEDELMRRFGAERTMAMLDRFGMDDTTPIQSKMVSKAVESSQKRVEGNNFDSRKQLLQYDDVLRQQREVIYKQRFEVIDSDNLKSIVINMIQSSIERAVGSYTPKEELPEEWKLDGLVELINTNYLDEGAISVKDIYGKEADEITSFIMDRIKEKYDAKEETYGDEQMREFEKVIVLRAVDSKWMDHIDAMDQLRQGIHLRAYAQTNPLREYQMEGFAMFEHMVASIEDDVAKYVLKSEIQNNLEREEVVQGQTTAHQPQEGDEEKTVKKKPVRKVVDIGRNSPCHCGSGKKYKNCHGKTE.

Residues Gln-85, 103–107 (GEGKT), and Asp-492 contribute to the ATP site. The interval 788-841 (EVVQGQTTAHQPQEGDEEKTVKKKPVRKVVDIGRNSPCHCGSGKKYKNCHGKTE) is disordered. Residues Cys-825, Cys-827, Cys-836, and His-837 each contribute to the Zn(2+) site. Basic residues predominate over residues 829 to 841 (SGKKYKNCHGKTE).

It belongs to the SecA family. As to quaternary structure, monomer and homodimer. Part of the essential Sec protein translocation apparatus which comprises SecA, SecYEG and auxiliary proteins SecDF. Other proteins may also be involved. The cofactor is Zn(2+).

Its subcellular location is the cell membrane. The protein localises to the cytoplasm. The enzyme catalyses ATP + H2O + cellular proteinSide 1 = ADP + phosphate + cellular proteinSide 2.. Its function is as follows. Part of the Sec protein translocase complex. Interacts with the SecYEG preprotein conducting channel. Has a central role in coupling the hydrolysis of ATP to the transfer of proteins into and across the cell membrane, serving as an ATP-driven molecular motor driving the stepwise translocation of polypeptide chains across the membrane. In Bacillus pumilus (strain SAFR-032), this protein is Protein translocase subunit SecA.